The following is a 2595-amino-acid chain: Glucosylceramide transporter ABCA12 (2595 aa).

The chain crosses the membrane as a helical span at residues 23-43; the sequence is PLWTLVLILWPVIIFIILAIT. The segment covering 109–119 has biased composition (basic and acidic residues); the sequence is LKKPSNPKRDS. The tract at residues 109-143 is disordered; sequence LKKPSNPKRDSNLSLRSTQVPERSHTSLATVPPRP. Asn120, Asn156, Asn174, Asn214, Asn275, Asn331, Asn365, Asn381, Asn410, Asn433, Asn455, Asn526, Asn541, Asn574, Asn605, Asn645, Asn749, Asn773, Asn812, Asn823, Asn854, Asn917, and Asn960 each carry an N-linked (GlcNAc...) asparagine glycan. Over residues 120–137 the composition is skewed to polar residues; the sequence is NLSLRSTQVPERSHTSLA. Transmembrane regions (helical) follow at residues 1062-1082, 1109-1129, and 1142-1162; these read VSYS…AAFV, FAWL…LIVI, and FILF…SYLI. Asn1167 carries N-linked (GlcNAc...) asparagine glycosylation. A run of 3 helical transmembrane segments spans residues 1171 to 1191, 1197 to 1217, and 1247 to 1267; these read IAAL…IVLV, LSYV…SYAS, and FGWL…IAWY. N-linked (GlcNAc...) asparagine glycosylation occurs at Asn1319. An ABC transporter 1 domain is found at 1346–1577; it reads VALHGVTKIY…FGDGYHLTLT (232 aa). 1378–1385 contacts ATP; the sequence is GPNGAGKT. N-linked (GlcNAc...) asparagine glycans are attached at residues Asn1524, Asn1663, Asn1673, Asn1686, Asn1690, and Asn1704. Residues 1672–1703 are disordered; that stretch reads SNMSLEHLTQRKVGNPSANGTSTPDDLSVSSS. Positions 1687-1703 are enriched in polar residues; sequence PSANGTSTPDDLSVSSS. A helical membrane pass occupies residues 1747-1767; sequence LIAQVILPIVFVATAMGLGTL. Asn1819, Asn1835, Asn1876, Asn1921, and Asn1952 each carry an N-linked (GlcNAc...) asparagine glycan. A run of 7 helical transmembrane segments spans residues 1979–1999, 2035–2055, 2072–2092, 2103–2123, 2143–2163, 2187–2207, and 2270–2290; these read ATIS…GYSV, FIYD…VIAI, LLLL…AGLF, VCVN…VYFL, IFLI…SQQQ, GAMF…RLLI, and IIAV…GLLG. The 236-residue stretch at 2254 to 2489 folds into the ABC transporter 2 domain; it reads VQLHRLTKTY…FGRGFTVKVH (236 aa). 2290-2297 provides a ligand contact to ATP; it reads GVNGAGKT. Asn2318, Asn2542, and Asn2547 each carry an N-linked (GlcNAc...) asparagine glycan. The segment covering 2575-2587 has biased composition (polar residues); the sequence is VDTSSQGSTISVD. The tract at residues 2575–2595 is disordered; it reads VDTSSQGSTISVDSQEDQLDS.

The protein belongs to the ABC transporter superfamily. ABCA family. As to quaternary structure, interacts with NR1H2 and ABCA1; this interaction is required for ABCA1 localization to the cell surface and is necessary for its normal activity and stability. In terms of tissue distribution, expressed in a number of other tissues besides skin, including heart, intestine, stomach, and kidney. Expressed mainly in the granular layer of the skin. Expressed in lung. Expressed in alpha and beta cells of pancreatic islets.

The protein resides in the cytoplasmic vesicle. Its subcellular location is the secretory vesicle membrane. It localises to the golgi apparatus membrane. The enzyme catalyses ATP + H2O + phospholipidSide 1 = ADP + phosphate + phospholipidSide 2.. It catalyses the reaction a beta-D-glucosylceramide(in) + ATP + H2O = a beta-D-glucosylceramide(out) + ADP + phosphate + H(+). Transports lipids such as glucosylceramides from the outer to the inner leaflet of lamellar granules (LGs) membrane, whereby the lipids are finally transported to the keratinocyte periphery via the trans-Golgi network and LGs and released to the apical surface of the granular keratinocytes to form lipid lamellae in the stratum corneum of the epidermis, which is essential for skin barrier function. In the meantime, participates in the transport of the lamellar granules-associated proteolytic enzymes, in turn regulates desquamation and keratinocyte differentiation. Furthermore, is essential for the regulation of cellular cholesterol homeostasis by regulating ABCA1-dependent cholesterol efflux from macrophages through interaction with NR1H2 and ABCA1. Plays pleiotropic roles in regulating glucose stimulated insulin secretion from beta cells, regulating the morphology and fusion of insulin granules, lipid raft abundance and the actin cytoskeleton. Also involved in lung surfactant biogenesis. This chain is Glucosylceramide transporter ABCA12, found in Mus musculus (Mouse).